The sequence spans 154 residues: MLAAALRRCXASVRVLLPKPGAAAPSSWSSSAFRATAAIQSVRCYSHGSHETDEEFDARWVTYFSKPDLDAWELRKGMNTLVGYDLVPEPKIIDAALRACRRLDDFASAVRILEVVKDKAGPHKEIYPYIIQELRPTLDELGISTPEELGLDKP.

The N-terminal 45 residues, 1-45 (MLAAALRRCXASVRVLLPKPGAAAPSSWSSSAFRATAAIQSVRCY), are a transit peptide targeting the mitochondrion. The SIFI-degron signature appears at 2 to 21 (LAAALRRCXASVRVLLPKPG). An N6-acetyllysine mark is found at Lys91 and Lys117. Thr145 is subject to Phosphothreonine.

Belongs to the cytochrome c oxidase subunit 5A family. As to quaternary structure, component of the cytochrome c oxidase (complex IV, CIV), a multisubunit enzyme composed of 14 subunits. The complex is composed of a catalytic core of 3 subunits MT-CO1, MT-CO2 and MT-CO3, encoded in the mitochondrial DNA, and 11 supernumerary subunits COX4I, COX5A, COX5B, COX6A, COX6B, COX6C, COX7A, COX7B, COX7C, COX8 and NDUFA4, which are encoded in the nuclear genome. The complex exists as a monomer or a dimer and forms supercomplexes (SCs) in the inner mitochondrial membrane with NADH-ubiquinone oxidoreductase (complex I, CI) and ubiquinol-cytochrome c oxidoreductase (cytochrome b-c1 complex, complex III, CIII), resulting in different assemblies (supercomplex SCI(1)III(2)IV(1) and megacomplex MCI(2)III(2)IV(2)). Interacts with AFG1L. Interacts with RAB5IF. In terms of processing, in response to mitochondrial stress, the precursor protein is ubiquitinated by the SIFI complex in the cytoplasm before mitochondrial import, leading to its degradation. Within the SIFI complex, UBR4 initiates ubiquitin chain that are further elongated or branched by KCMF1.

The protein resides in the mitochondrion inner membrane. The protein operates within energy metabolism; oxidative phosphorylation. Its function is as follows. Component of the cytochrome c oxidase, the last enzyme in the mitochondrial electron transport chain which drives oxidative phosphorylation. The respiratory chain contains 3 multisubunit complexes succinate dehydrogenase (complex II, CII), ubiquinol-cytochrome c oxidoreductase (cytochrome b-c1 complex, complex III, CIII) and cytochrome c oxidase (complex IV, CIV), that cooperate to transfer electrons derived from NADH and succinate to molecular oxygen, creating an electrochemical gradient over the inner membrane that drives transmembrane transport and the ATP synthase. Cytochrome c oxidase is the component of the respiratory chain that catalyzes the reduction of oxygen to water. Electrons originating from reduced cytochrome c in the intermembrane space (IMS) are transferred via the dinuclear copper A center (CU(A)) of subunit 2 and heme A of subunit 1 to the active site in subunit 1, a binuclear center (BNC) formed by heme A3 and copper B (CU(B)). The BNC reduces molecular oxygen to 2 water molecules using 4 electrons from cytochrome c in the IMS and 4 protons from the mitochondrial matrix. The protein is Cytochrome c oxidase subunit 5A, mitochondrial (COX5A) of Notamacropus parma (Parma wallaby).